The following is a 91-amino-acid chain: RNA-binding protein Hfq (91 aa).

One can recognise a Sm domain in the interval aspartate 9 to valine 68.

This sequence belongs to the Hfq family. Homohexamer.

RNA chaperone that binds small regulatory RNA (sRNAs) and mRNAs to facilitate mRNA translational regulation in response to envelope stress, environmental stress and changes in metabolite concentrations. Also binds with high specificity to tRNAs. The chain is RNA-binding protein Hfq from Stenotrophomonas maltophilia (strain K279a).